Here is a 191-residue protein sequence, read N- to C-terminus: Potassium-transporting ATPase KdpC subunit (191 aa).

Residues 6 to 26 (PALVLFILLTLLTGGVYPLLT) form a helical membrane-spanning segment.

Belongs to the KdpC family. In terms of assembly, the system is composed of three essential subunits: KdpA, KdpB and KdpC.

It is found in the cell inner membrane. Its function is as follows. Part of the high-affinity ATP-driven potassium transport (or Kdp) system, which catalyzes the hydrolysis of ATP coupled with the electrogenic transport of potassium into the cytoplasm. This subunit acts as a catalytic chaperone that increases the ATP-binding affinity of the ATP-hydrolyzing subunit KdpB by the formation of a transient KdpB/KdpC/ATP ternary complex. The chain is Potassium-transporting ATPase KdpC subunit from Klebsiella pneumoniae subsp. pneumoniae (strain ATCC 700721 / MGH 78578).